The following is a 143-amino-acid chain: Large-conductance mechanosensitive channel (143 aa).

A run of 2 helical transmembrane segments spans residues 10–30 and 89–109; these read FAVKGNVMDLAVGVIIGGAFS and GSFITVAINFVILAFIIFLMV.

The protein belongs to the MscL family. In terms of assembly, homopentamer.

Its subcellular location is the cell inner membrane. Functionally, channel that opens in response to stretch forces in the membrane lipid bilayer. May participate in the regulation of osmotic pressure changes within the cell. This chain is Large-conductance mechanosensitive channel, found in Burkholderia cenocepacia (strain ATCC BAA-245 / DSM 16553 / LMG 16656 / NCTC 13227 / J2315 / CF5610) (Burkholderia cepacia (strain J2315)).